The chain runs to 190 residues: Peptidyl-prolyl cis-trans isomerase A (190 aa).

Residues 1–23 (MSKRILAAVVTVLSLTAFSPAFA) form the signal peptide. Positions 26–187 (TSTHVLLTTS…KPIVIQSAKI (162 aa)) constitute a PPIase cyclophilin-type domain.

Belongs to the cyclophilin-type PPIase family.

It is found in the periplasm. The enzyme catalyses [protein]-peptidylproline (omega=180) = [protein]-peptidylproline (omega=0). Its function is as follows. PPIases accelerate the folding of proteins. It catalyzes the cis-trans isomerization of proline imidic peptide bonds in oligopeptides. The chain is Peptidyl-prolyl cis-trans isomerase A (rotA) from Dickeya dadantii (strain 3937) (Erwinia chrysanthemi (strain 3937)).